Reading from the N-terminus, the 104-residue chain is Nucleoid-associated protein EF_2780 (104 aa).

Belongs to the YbaB/EbfC family. As to quaternary structure, homodimer.

It localises to the cytoplasm. It is found in the nucleoid. Binds to DNA and alters its conformation. May be involved in regulation of gene expression, nucleoid organization and DNA protection. The protein is Nucleoid-associated protein EF_2780 of Enterococcus faecalis (strain ATCC 700802 / V583).